A 427-amino-acid chain; its full sequence is Glutamate-1-semialdehyde 2,1-aminomutase (427 aa).

Lys-265 carries the post-translational modification N6-(pyridoxal phosphate)lysine.

Belongs to the class-III pyridoxal-phosphate-dependent aminotransferase family. HemL subfamily. Homodimer. Requires pyridoxal 5'-phosphate as cofactor.

It is found in the cytoplasm. It catalyses the reaction (S)-4-amino-5-oxopentanoate = 5-aminolevulinate. It functions in the pathway porphyrin-containing compound metabolism; protoporphyrin-IX biosynthesis; 5-aminolevulinate from L-glutamyl-tRNA(Glu): step 2/2. The protein is Glutamate-1-semialdehyde 2,1-aminomutase of Bordetella parapertussis (strain 12822 / ATCC BAA-587 / NCTC 13253).